Reading from the N-terminus, the 479-residue chain is Shugoshin (479 aa).

A coiled-coil region spans residues 36–76; it reads SLRIRSLESEVSNLLSENVSLREQIITLTQELERFEAARTL. 3 disordered regions span residues 109–145, 220–247, and 263–479; these read SRAV…GFLD, EHSL…QADT, and AKRK…SMPP. The span at 123-132 shows a compositional bias: basic and acidic residues; the sequence is QSRESGPKEV. Residues 270-286 show a composition bias toward acidic residues; it reads EDDESLFESSPSEDDEF. Composition is skewed to polar residues over residues 290-303 and 318-328; these read RPAQ…QNEH and QSPTLSSQNDH. Basic and acidic residues-rich tracts occupy residues 335–352 and 379–388; these read PQSE…RVLE and GYNEKSEKPL. Positions 400–411 are enriched in polar residues; that stretch reads KNASPKKSSTRT.

Belongs to the shugoshin family.

It localises to the nucleus. The protein resides in the chromosome. Its subcellular location is the centromere. Functionally, plays a central role in chromosome cohesion during cell division by preventing premature dissociation of cohesin complex from centromeres after prophase, when most of cohesin complex dissociates from chromosomes arms. The polypeptide is Shugoshin (sgo1) (Emericella nidulans (strain FGSC A4 / ATCC 38163 / CBS 112.46 / NRRL 194 / M139) (Aspergillus nidulans)).